We begin with the raw amino-acid sequence, 297 residues long: E3 ubiquitin-protein ligase RNF212B (297 aa).

The RING-type zinc-finger motif lies at 6-40; that stretch reads CNQCFRKDGAHFFVTSCGHIFCKKCMTLEKCAVCG. Residues 87-136 are a coiled coil; that stretch reads LLIAFYKDRITKLEAAVKEAQEMAASQNKELSALRKENGELKKILDILKG. 2 disordered regions span residues 152–179 and 198–269; these read VGIT…RSSS and RGLH…ESLP. Low complexity predominate over residues 163–179; the sequence is PRPSSHHSSQVVSRSSS. A compositionally biased stretch (polar residues) spans 206 to 234; it reads PGDSYTETPSPASTHSLSYRPSSASSGQG.

As to quaternary structure, homodimer. Autoubiquitinated.

It localises to the chromosome. It carries out the reaction S-ubiquitinyl-[E2 ubiquitin-conjugating enzyme]-L-cysteine + [acceptor protein]-L-lysine = [E2 ubiquitin-conjugating enzyme]-L-cysteine + N(6)-ubiquitinyl-[acceptor protein]-L-lysine.. It participates in protein modification; protein ubiquitination. Ubiquitin E3 ligase that acts as a crucial factor for crossing-over (CO) formation during meiosis. Essential for normal prophase I progression and for ensuring appropriate CO designation in meiosis. Recruits key components of the cross-over machinery either directly ou indirectly, leading to the activation of the MutL-gamma complex. The function of RNF212B in CO designation is dependent on its catalytic activity. In Mus musculus (Mouse), this protein is E3 ubiquitin-protein ligase RNF212B (Rnf212b).